Here is a 357-residue protein sequence, read N- to C-terminus: Fructose-1,6-bisphosphatase class 1 3 (357 aa).

Residues Glu-94, Asp-116, Leu-118, and Asp-119 each contribute to the Mg(2+) site. Substrate is bound by residues 119 to 122 and Asn-211; that span reads DGSS. Residue Glu-283 coordinates Mg(2+).

Belongs to the FBPase class 1 family. As to quaternary structure, homotetramer. Mg(2+) serves as cofactor.

The protein resides in the cytoplasm. It carries out the reaction beta-D-fructose 1,6-bisphosphate + H2O = beta-D-fructose 6-phosphate + phosphate. The protein operates within carbohydrate biosynthesis; Calvin cycle. The chain is Fructose-1,6-bisphosphatase class 1 3 from Methylibium petroleiphilum (strain ATCC BAA-1232 / LMG 22953 / PM1).